The following is a 250-amino-acid chain: UPF0193 protein EVG1 homolog (250 aa).

The interval 86-110 (ESLRNGEPLPLPEPPRPNTNNDPDK) is disordered.

Belongs to the UPF0193 (EVG1) family.

This chain is UPF0193 protein EVG1 homolog, found in Drosophila melanogaster (Fruit fly).